The following is a 382-amino-acid chain: D-galactonate dehydratase (382 aa).

D183 is a binding site for Mg(2+). H185 (proton donor) is an active-site residue. 2 residues coordinate Mg(2+): E209 and E235. The active-site Proton acceptor is H285. The segment at 361–382 (NENPPDWRNPVWRHSDGSIAEW) is disordered.

This sequence belongs to the mandelate racemase/muconate lactonizing enzyme family. GalD subfamily. The cofactor is Mg(2+).

It catalyses the reaction D-galactonate = 2-dehydro-3-deoxy-D-galactonate + H2O. Its pathway is carbohydrate acid metabolism; D-galactonate degradation; D-glyceraldehyde 3-phosphate and pyruvate from D-galactonate: step 1/3. Catalyzes the dehydration of D-galactonate to 2-keto-3-deoxy-D-galactonate. In Xanthomonas euvesicatoria pv. vesicatoria (strain 85-10) (Xanthomonas campestris pv. vesicatoria), this protein is D-galactonate dehydratase.